A 532-amino-acid chain; its full sequence is Probable G-protein coupled receptor Mth-like 11 (532 aa).

The signal sequence occupies residues 1 to 20 (MGMFRVEYLLLGILVIGVRS). Residues 21–229 (RDIPNCDFFD…VRKSRLSNAS (209 aa)) lie on the Extracellular side of the membrane. Intrachain disulfides connect C26/C80, C82/C87, C91/C184, C92/C103, and C145/C204. N42 carries N-linked (GlcNAc...) asparagine glycosylation. N-linked (GlcNAc...) asparagine glycans are attached at residues N110, N123, N166, N195, and N227. A helical membrane pass occupies residues 230–250 (IPVKFSSVFFMVITIAAYLWL). Residues 251–262 (PKFRSLHGKCCN) are Cytoplasmic-facing. A helical membrane pass occupies residues 263-283 (LYFICLAITFLLNVISLFGIF). The Extracellular segment spans residues 284–290 (ELKTPIC). The helical transmembrane segment at 291–311 (YLTGYAGYFTVMATFLWLSVI) threads the bilayer. The Cytoplasmic portion of the chain corresponds to 312–339 (SFDVWRRFAMRKFQVFYKNKRSSFFNYN). The helical transmembrane segment at 340–360 (IIVWSSAGLLTCIIFLVDQFV) threads the bilayer. Residues 361–386 (ETNLDNPYNPAVGVFSCWIFTNGWSA) are Extracellular-facing. A helical transmembrane segment spans residues 387–407 (TFYFYAPLAILIILNCASFFL). Over 408–439 (TTRYIYVENKQNQKVLNNSEPQKLSRNHANYR) the chain is Cytoplasmic. The helical transmembrane segment at 440–460 (IYFRLFIIMGGSWFLEIIAFI) threads the bilayer. Topologically, residues 461–469 (CEMENMWKP) are extracellular. Residues 470–490 (LIILNDYINCSQGIIIFVATF) form a helical membrane-spanning segment. Over 491–532 (CNHEMFRLIRKRIQNRNITSLELTNTSRPVESEKMADVELGK) the chain is Cytoplasmic.

It belongs to the G-protein coupled receptor 2 family. Mth subfamily.

It localises to the cell membrane. The protein is Probable G-protein coupled receptor Mth-like 11 (mthl11) of Drosophila melanogaster (Fruit fly).